The primary structure comprises 141 residues: Nucleoside diphosphate kinase (141 aa).

K11, F59, R87, T93, R104, and N114 together coordinate ATP. Catalysis depends on H117, which acts as the Pros-phosphohistidine intermediate.

It belongs to the NDK family. As to quaternary structure, homotetramer. Mg(2+) serves as cofactor.

It is found in the cytoplasm. The catalysed reaction is a 2'-deoxyribonucleoside 5'-diphosphate + ATP = a 2'-deoxyribonucleoside 5'-triphosphate + ADP. It carries out the reaction a ribonucleoside 5'-diphosphate + ATP = a ribonucleoside 5'-triphosphate + ADP. In terms of biological role, major role in the synthesis of nucleoside triphosphates other than ATP. The ATP gamma phosphate is transferred to the NDP beta phosphate via a ping-pong mechanism, using a phosphorylated active-site intermediate. The protein is Nucleoside diphosphate kinase of Legionella pneumophila (strain Paris).